We begin with the raw amino-acid sequence, 433 residues long: Glutamate-1-semialdehyde 2,1-aminomutase (433 aa).

At Lys270 the chain carries N6-(pyridoxal phosphate)lysine.

It belongs to the class-III pyridoxal-phosphate-dependent aminotransferase family. HemL subfamily. As to quaternary structure, homodimer. Pyridoxal 5'-phosphate is required as a cofactor.

It is found in the cytoplasm. The catalysed reaction is (S)-4-amino-5-oxopentanoate = 5-aminolevulinate. Its pathway is porphyrin-containing compound metabolism; protoporphyrin-IX biosynthesis; 5-aminolevulinate from L-glutamyl-tRNA(Glu): step 2/2. In Symbiobacterium thermophilum (strain DSM 24528 / JCM 14929 / IAM 14863 / T), this protein is Glutamate-1-semialdehyde 2,1-aminomutase.